Here is a 770-residue protein sequence, read N- to C-terminus: Shutoff protein (770 aa).

Disordered stretches follow at residues 1–20 (MEEDLKLQPDSETLTTPNSE) and 30–49 (EEENEQVEQDPGYVTPPEDG). Polar residues predominate over residues 10 to 19 (DSETLTTPNS). The binding to host EIF4G stretch occupies residues 248–312 (VMDQVLIKRA…AVLVTVELEC (65 aa)). Positions 315–433 (RFFANPQTLR…ELWTSFDERT (119 aa)) constitute an RRM domain. Phosphotyrosine; by host is present on residues tyrosine 332 and tyrosine 647. Residues 661–770 (LSAAASCRSQ…TATMFTESQP (110 aa)) are disordered. Positions 726 to 739 (GGPRGRGGRNHRQR) are enriched in basic residues. Polar residues predominate over residues 742-755 (TIFQKTRSEPTSEN).

It belongs to the adenoviridae shutoff protein family. In terms of assembly, monomer. Interacts with hexon protein; this interaction allows chaperoning and trimerization of hexon proteins. Interacts (via N-terminus) with host initiation factor EIF4G (via C-terminus). Interacts (via RRM domain) with viral mRNAs that contain the tripartite leader; this interaction allows ribosome shunting and expression of viral late mRNAs. Might be cleaved by the viral protease. In terms of processing, phosphorylated. Tyrosine phosphorylation enhances preferential binding to tripartite leader mRNAs and allows ribosome shunting. Post-translationally, methylated. Asymmetric dimethylation by host PRMT1 of the Arg/Gly-rich region may regulate shutoff protein binding to hexon and promote the capsid assembly in the nucleus.

The protein resides in the host cytoplasm. In terms of biological role, protein that inhibits host translation while promoting late viral translation by ribosome shunting. Blocks host cap-dependent translation by binding to eIF4G, displacing MKNK1 from cap initiation complexes and preventing EIF4E phosphorylation. Binds to the tripartite leader sequence of viral late mRNAs and recruits host eIF4G, PABPC1/poly-A binding protein and 40S ribosomes subunits on viral mRNAs, allowing ribosome shunting and efficient translation of late viral mRNAs even though conventional translation via ribosome scanning from the cap has been shut off in the host cell. During assembly, acts as a chaperone protein that helps hexon proteins assembly into trimers. The protein is Shutoff protein of Human adenovirus F serotype 40 (HAdV-40).